The following is a 372-amino-acid chain: Long-tail fiber protein gp35 (372 aa).

In terms of domain architecture, GG-type lectin spans 22–193; that stretch reads NSVRYKISIA…VGATGFPRGT (172 aa).

In terms of assembly, the long-tail fibers are trimeric, with a stoichiometry of gp34/gp37/gp36/gp35 of 3:3:3:1.

It localises to the virion. Structural component of the distal-half of the long-tail fiber. The long-tail fiber of T4 is about 1600 Angstroms long with a kink in the middle that divides the fiber into proximal and distal halves. The latter hinge is probably composed of gp35 protein. The polypeptide is Long-tail fiber protein gp35 (35) (Enterobacteria phage T4 (Bacteriophage T4)).